Here is a 172-residue protein sequence, read N- to C-terminus: NAD(P)H-quinone oxidoreductase subunit I, chloroplastic (172 aa).

2 4Fe-4S ferredoxin-type domains span residues 55–84 (GRIH…VDWK) and 95–124 (LNYS…MTEE). Residues cysteine 64, cysteine 67, cysteine 70, cysteine 74, cysteine 104, cysteine 107, cysteine 110, and cysteine 114 each contribute to the [4Fe-4S] cluster site.

The protein belongs to the complex I 23 kDa subunit family. NDH is composed of at least 16 different subunits, 5 of which are encoded in the nucleus. [4Fe-4S] cluster is required as a cofactor.

Its subcellular location is the plastid. The protein resides in the chloroplast thylakoid membrane. The enzyme catalyses a plastoquinone + NADH + (n+1) H(+)(in) = a plastoquinol + NAD(+) + n H(+)(out). It carries out the reaction a plastoquinone + NADPH + (n+1) H(+)(in) = a plastoquinol + NADP(+) + n H(+)(out). Its function is as follows. NDH shuttles electrons from NAD(P)H:plastoquinone, via FMN and iron-sulfur (Fe-S) centers, to quinones in the photosynthetic chain and possibly in a chloroplast respiratory chain. The immediate electron acceptor for the enzyme in this species is believed to be plastoquinone. Couples the redox reaction to proton translocation, and thus conserves the redox energy in a proton gradient. This Capsella bursa-pastoris (Shepherd's purse) protein is NAD(P)H-quinone oxidoreductase subunit I, chloroplastic.